The primary structure comprises 236 residues: Small ribosomal subunit protein uS2c (236 aa).

The protein belongs to the universal ribosomal protein uS2 family.

It is found in the plastid. The protein resides in the chloroplast. The protein is Small ribosomal subunit protein uS2c (rps2) of Nicotiana tabacum (Common tobacco).